The primary structure comprises 456 residues: Enolase (456 aa).

Residue Gln164 participates in (2R)-2-phosphoglycerate binding. The active-site Proton donor is Glu207. Mg(2+) is bound by residues Asp244, Glu287, and Asp314. (2R)-2-phosphoglycerate is bound by residues Lys339, Arg368, Ser369, and Lys390. The Proton acceptor role is filled by Lys339.

Belongs to the enolase family. As to quaternary structure, component of the RNA degradosome, a multiprotein complex involved in RNA processing and mRNA degradation. Requires Mg(2+) as cofactor.

The protein resides in the cytoplasm. Its subcellular location is the secreted. It is found in the cell surface. It catalyses the reaction (2R)-2-phosphoglycerate = phosphoenolpyruvate + H2O. Its pathway is carbohydrate degradation; glycolysis; pyruvate from D-glyceraldehyde 3-phosphate: step 4/5. Catalyzes the reversible conversion of 2-phosphoglycerate (2-PG) into phosphoenolpyruvate (PEP). It is essential for the degradation of carbohydrates via glycolysis. This chain is Enolase, found in Francisella tularensis subsp. tularensis (strain FSC 198).